The following is a 370-amino-acid chain: Putative phosphoserine aminotransferase (370 aa).

Positions methionine 1 to serine 22 are disordered. Position 44 (arginine 44) interacts with L-glutamate. 4 residues coordinate pyridoxal 5'-phosphate: phenylalanine 102, threonine 148, aspartate 170, and glutamine 193. Lysine 194 carries the post-translational modification N6-(pyridoxal phosphate)lysine. Asparagine 245–threonine 246 provides a ligand contact to pyridoxal 5'-phosphate.

The protein belongs to the class-V pyridoxal-phosphate-dependent aminotransferase family. SerC subfamily. As to quaternary structure, homodimer. Requires pyridoxal 5'-phosphate as cofactor.

Its subcellular location is the cytoplasm. It carries out the reaction O-phospho-L-serine + 2-oxoglutarate = 3-phosphooxypyruvate + L-glutamate. The catalysed reaction is 4-(phosphooxy)-L-threonine + 2-oxoglutarate = (R)-3-hydroxy-2-oxo-4-phosphooxybutanoate + L-glutamate. Its pathway is amino-acid biosynthesis; L-serine biosynthesis; L-serine from 3-phospho-D-glycerate: step 2/3. It participates in cofactor biosynthesis; pyridoxine 5'-phosphate biosynthesis; pyridoxine 5'-phosphate from D-erythrose 4-phosphate: step 3/5. In terms of biological role, catalyzes the reversible conversion of 3-phosphohydroxypyruvate to phosphoserine and of 3-hydroxy-2-oxo-4-phosphonooxybutanoate to phosphohydroxythreonine. The chain is Putative phosphoserine aminotransferase from Mycobacterium sp. (strain JLS).